We begin with the raw amino-acid sequence, 558 residues long: Methionine--tRNA ligase 1 (558 aa).

Positions P10 to N20 match the 'HIGH' region motif. The Zn(2+) site is built by C142, C145, C155, and C158. The 'KMSKS' region motif lies at K332–S336. T335 lines the ATP pocket.

Belongs to the class-I aminoacyl-tRNA synthetase family. MetG type 1 subfamily. In terms of assembly, monomer. Requires Zn(2+) as cofactor.

It is found in the cytoplasm. It carries out the reaction tRNA(Met) + L-methionine + ATP = L-methionyl-tRNA(Met) + AMP + diphosphate. Its function is as follows. Is required not only for elongation of protein synthesis but also for the initiation of all mRNA translation through initiator tRNA(fMet) aminoacylation. The sequence is that of Methionine--tRNA ligase 1 from Acaryochloris marina (strain MBIC 11017).